The chain runs to 102 residues: Small ribosomal subunit protein eS24 (102 aa).

This sequence belongs to the eukaryotic ribosomal protein eS24 family.

The protein is Small ribosomal subunit protein eS24 of Methanococcoides burtonii (strain DSM 6242 / NBRC 107633 / OCM 468 / ACE-M).